Consider the following 547-residue polypeptide: Glucose-6-phosphate isomerase (547 aa).

The Proton donor role is filled by E354. Active-site residues include H385 and K513.

The protein belongs to the GPI family.

The protein localises to the cytoplasm. The enzyme catalyses alpha-D-glucose 6-phosphate = beta-D-fructose 6-phosphate. It functions in the pathway carbohydrate biosynthesis; gluconeogenesis. It participates in carbohydrate degradation; glycolysis; D-glyceraldehyde 3-phosphate and glycerone phosphate from D-glucose: step 2/4. Catalyzes the reversible isomerization of glucose-6-phosphate to fructose-6-phosphate. The sequence is that of Glucose-6-phosphate isomerase from Erwinia tasmaniensis (strain DSM 17950 / CFBP 7177 / CIP 109463 / NCPPB 4357 / Et1/99).